A 374-amino-acid polypeptide reads, in one-letter code: S-adenosylmethionine:tRNA ribosyltransferase-isomerase (374 aa).

It belongs to the QueA family. As to quaternary structure, monomer.

The protein localises to the cytoplasm. The enzyme catalyses 7-aminomethyl-7-carbaguanosine(34) in tRNA + S-adenosyl-L-methionine = epoxyqueuosine(34) in tRNA + adenine + L-methionine + 2 H(+). It functions in the pathway tRNA modification; tRNA-queuosine biosynthesis. Transfers and isomerizes the ribose moiety from AdoMet to the 7-aminomethyl group of 7-deazaguanine (preQ1-tRNA) to give epoxyqueuosine (oQ-tRNA). In Prochlorococcus marinus (strain MIT 9215), this protein is S-adenosylmethionine:tRNA ribosyltransferase-isomerase.